The chain runs to 232 residues: 2-C-methyl-D-erythritol 4-phosphate cytidylyltransferase (232 aa).

Belongs to the IspD/TarI cytidylyltransferase family. IspD subfamily.

It catalyses the reaction 2-C-methyl-D-erythritol 4-phosphate + CTP + H(+) = 4-CDP-2-C-methyl-D-erythritol + diphosphate. Its pathway is isoprenoid biosynthesis; isopentenyl diphosphate biosynthesis via DXP pathway; isopentenyl diphosphate from 1-deoxy-D-xylulose 5-phosphate: step 2/6. Its function is as follows. Catalyzes the formation of 4-diphosphocytidyl-2-C-methyl-D-erythritol from CTP and 2-C-methyl-D-erythritol 4-phosphate (MEP). In Nitrosospira multiformis (strain ATCC 25196 / NCIMB 11849 / C 71), this protein is 2-C-methyl-D-erythritol 4-phosphate cytidylyltransferase.